The sequence spans 567 residues: Thiol:disulfide interchange protein DsbD (567 aa).

A signal peptide spans 1-19 (MAQRIFTLILLLCSTSAFA). 2 disulfide bridges follow: cysteine 122-cysteine 128 and cysteine 185-cysteine 307. The next 7 helical transmembrane spans lie at 170–192 (ALWALLIGIGIAFTPCVLPMYPL), 212–234 (LAFIYVQGMALTYTALGLVVAAA), 246–268 (YVLIGLAIVFTLLALSMFGLFTL), 297–319 (GAIAGLICSPCTTAPLSAILLYI), 326–348 (WLGGGTLYLYALGMGLPLMLVTV), 358–380 (GPWMAHVKTAFGFVILALPVFLL), and 387–409 (AWGLRLWSLLGVAFFGWAFITSL). One can recognise a Thioredoxin domain in the interval 435–567 (QDWAFGSPSA…FSAHLHDRQP (133 aa)). A disulfide bond links cysteine 482 and cysteine 485.

This sequence belongs to the thioredoxin family. DsbD subfamily.

The protein resides in the cell inner membrane. The enzyme catalyses [protein]-dithiol + NAD(+) = [protein]-disulfide + NADH + H(+). It catalyses the reaction [protein]-dithiol + NADP(+) = [protein]-disulfide + NADPH + H(+). Functionally, required to facilitate the formation of correct disulfide bonds in some periplasmic proteins and for the assembly of the periplasmic c-type cytochromes. Acts by transferring electrons from cytoplasmic thioredoxin to the periplasm. This transfer involves a cascade of disulfide bond formation and reduction steps. The chain is Thiol:disulfide interchange protein DsbD from Salmonella typhimurium (strain LT2 / SGSC1412 / ATCC 700720).